A 566-amino-acid chain; its full sequence is Urease subunit alpha (566 aa).

A Urease domain is found at Gly-129 to Phe-566. Ni(2+)-binding residues include His-134, His-136, and Lys-217. Lys-217 is modified (N6-carboxylysine). His-219 contacts substrate. Residues His-246 and His-272 each coordinate Ni(2+). His-320 serves as the catalytic Proton donor. Asp-360 serves as a coordination point for Ni(2+).

This sequence belongs to the metallo-dependent hydrolases superfamily. Urease alpha subunit family. In terms of assembly, heterotrimer of UreA (gamma), UreB (beta) and UreC (alpha) subunits. Three heterotrimers associate to form the active enzyme. It depends on Ni cation as a cofactor. In terms of processing, carboxylation allows a single lysine to coordinate two nickel ions.

Its subcellular location is the cytoplasm. It carries out the reaction urea + 2 H2O + H(+) = hydrogencarbonate + 2 NH4(+). It functions in the pathway nitrogen metabolism; urea degradation; CO(2) and NH(3) from urea (urease route): step 1/1. The polypeptide is Urease subunit alpha (Janthinobacterium sp. (strain Marseille) (Minibacterium massiliensis)).